A 327-amino-acid polypeptide reads, in one-letter code: Alkanal monooxygenase beta chain (327 aa).

It belongs to the bacterial luciferase oxidoreductase family. As to quaternary structure, heterodimer of an alpha and a beta chain.

It catalyses the reaction a long-chain fatty aldehyde + FMNH2 + O2 = a long-chain fatty acid + hnu + FMN + H2O + 2 H(+). In terms of biological role, light-emitting reaction in luminous bacteria. The specific role of the beta subunit is unknown, but it is absolutely required for bioluminescence activity. This is Alkanal monooxygenase beta chain (luxB) from Photorhabdus luminescens (Xenorhabdus luminescens).